The sequence spans 479 residues: Zinc metalloproteinase/disintegrin PMMP-1 (479 aa).

Residues 1-20 form the signal peptide; it reads MIQVLLVTICLAVFPYQGSS. A propeptide spanning residues 21–188 is cleaved from the precursor; that stretch reads IILESGNVND…PIKKASKLVV (168 aa). Residues 194 to 390 form the Peptidase M12B domain; the sequence is RYVELVIVAD…HNPQCILNKP (197 aa). Cystine bridges form between C305–C385, C345–C369, and C347–C352. Zn(2+) is bound at residue H330. E331 is a catalytic residue. Zn(2+)-binding residues include H334 and H339. N-linked (GlcNAc...) asparagine glycosylation is present at N368. Positions 391-408 are excised as a propeptide; it reads LRTDTVSTPVSGNELLEA. In terms of domain architecture, Disintegrin spans 398-479; that stretch reads TPVSGNELLE…ADCPRNGLYG (82 aa). 6 cysteine pairs are disulfide-bonded: C412–C427, C414–C422, C421–C444, C435–C441, C440–C465, and C453–C472. A Cell attachment site motif is present at residues 457-459; it reads RGD.

This sequence belongs to the venom metalloproteinase (M12B) family. P-II subfamily. P-IIa sub-subfamily. In terms of assembly, monomer. Zn(2+) serves as cofactor. In terms of tissue distribution, expressed by the venom gland.

It localises to the secreted. In terms of biological role, impairs hemostasis in the envenomed animal. Its function is as follows. Inhibits platelet aggregation. This Protobothrops mucrosquamatus (Taiwan habu) protein is Zinc metalloproteinase/disintegrin PMMP-1.